We begin with the raw amino-acid sequence, 304 residues long: Aspartate carbamoyltransferase catalytic subunit (304 aa).

Residues Arg54 and Thr55 each contribute to the carbamoyl phosphate site. Lys83 lines the L-aspartate pocket. Residues Arg104, His132, and Gln135 each contribute to the carbamoyl phosphate site. L-aspartate contacts are provided by Arg165 and Arg226. 2 residues coordinate carbamoyl phosphate: Leu265 and Pro266.

It belongs to the aspartate/ornithine carbamoyltransferase superfamily. ATCase family. Heterooligomer of catalytic and regulatory chains.

It carries out the reaction carbamoyl phosphate + L-aspartate = N-carbamoyl-L-aspartate + phosphate + H(+). The protein operates within pyrimidine metabolism; UMP biosynthesis via de novo pathway; (S)-dihydroorotate from bicarbonate: step 2/3. Functionally, catalyzes the condensation of carbamoyl phosphate and aspartate to form carbamoyl aspartate and inorganic phosphate, the committed step in the de novo pyrimidine nucleotide biosynthesis pathway. The protein is Aspartate carbamoyltransferase catalytic subunit of Pyrobaculum islandicum (strain DSM 4184 / JCM 9189 / GEO3).